The sequence spans 502 residues: Xylulose kinase (502 aa).

82-83 (MH) is a substrate binding site. The Proton acceptor role is filled by D240.

Belongs to the FGGY kinase family.

The enzyme catalyses D-xylulose + ATP = D-xylulose 5-phosphate + ADP + H(+). Functionally, catalyzes the phosphorylation of D-xylulose to D-xylulose 5-phosphate. The polypeptide is Xylulose kinase (Levilactobacillus brevis (Lactobacillus brevis)).